Reading from the N-terminus, the 135-residue chain is Small ribosomal subunit protein bS16 (135 aa).

A disordered region spans residues 82–135 (RPAETVGKAKQAAKREADAKQAAKEAAEAKAAAADEKAAEAEASDSAESESTEG). Residues 94–121 (AKREADAKQAAKEAAEAKAAAADEKAAE) show a composition bias toward basic and acidic residues. Acidic residues predominate over residues 123–135 (EASDSAESESTEG).

It belongs to the bacterial ribosomal protein bS16 family.

The polypeptide is Small ribosomal subunit protein bS16 (Synechococcus sp. (strain CC9605)).